We begin with the raw amino-acid sequence, 206 residues long: N-(5'-phosphoribosyl)anthranilate isomerase (206 aa).

It belongs to the TrpF family.

It catalyses the reaction N-(5-phospho-beta-D-ribosyl)anthranilate = 1-(2-carboxyphenylamino)-1-deoxy-D-ribulose 5-phosphate. It participates in amino-acid biosynthesis; L-tryptophan biosynthesis; L-tryptophan from chorismate: step 3/5. This is N-(5'-phosphoribosyl)anthranilate isomerase from Pseudomonas putida (strain W619).